Reading from the N-terminus, the 748-residue chain is Choline O-acetyltransferase (748 aa).

Over residues 1–10 (MGLRTAKKRG) the composition is skewed to basic residues. The disordered stretch occupies residues 1-89 (MGLRTAKKRG…EWCGAASAEA (89 aa)). Residues 17–32 (WKREEGGGTRGRREVR) are compositionally biased toward basic and acidic residues. Gly residues predominate over residues 40–53 (GGRGDPGDVGGPAG). Low complexity-rich tracts occupy residues 54-65 (NPGCSPHPRAAT) and 73-89 (HTPAHTPEWCGAASAEA). Residue serine 125 is modified to Phosphoserine. Residue histidine 442 is the Proton acceptor of the active site. Residue serine 473 is modified to Phosphoserine. Residues 520–532 (GKTFIKKQKCSPD), serine 558, and glutamine 659 contribute to the CoA site. The interval 727-748 (PTESKPLATKEKATRPSQGHQP) is disordered.

The protein belongs to the carnitine/choline acetyltransferase family.

The catalysed reaction is choline + acetyl-CoA = acetylcholine + CoA. Its function is as follows. Catalyzes the reversible synthesis of acetylcholine (ACh) from acetyl CoA and choline at cholinergic synapses. This is Choline O-acetyltransferase (CHAT) from Homo sapiens (Human).